The following is a 1368-amino-acid chain: DNA-directed RNA polymerase subunit beta (1368 aa).

This sequence belongs to the RNA polymerase beta chain family. As to quaternary structure, the RNAP catalytic core consists of 2 alpha, 1 beta, 1 beta' and 1 omega subunit. When a sigma factor is associated with the core the holoenzyme is formed, which can initiate transcription.

The enzyme catalyses RNA(n) + a ribonucleoside 5'-triphosphate = RNA(n+1) + diphosphate. DNA-dependent RNA polymerase catalyzes the transcription of DNA into RNA using the four ribonucleoside triphosphates as substrates. This Herminiimonas arsenicoxydans protein is DNA-directed RNA polymerase subunit beta.